The following is a 394-amino-acid chain: Envelope glycoprotein D (394 aa).

The signal sequence occupies residues 1–25 (MGGTAARLGAVILFVVIVGLHGVRG). The segment at 25 to 57 (GKYALADASLKMADPNRFRGKDLPVLDQLTDPP) is interaction with TNFRSF14. Residues 26 to 339 (KYALADASLK…PYHPPATPNN (314 aa)) lie on the Virion surface side of the membrane. His-64 contacts Zn(2+). 3 disulfide bridges follow: Cys-91–Cys-214, Cys-131–Cys-227, and Cys-143–Cys-152. Residues Asn-119 and Asn-146 are each glycosylated (N-linked (GlcNAc...) asparagine; by host). Asp-240 is a binding site for Zn(2+). Positions 261–305 (LKIAGWHGPKAPYTSTLLPPELSETPNATQPELAPEDPEDSALLE) are profusion. The interval 275–301 (STLLPPELSETPNATQPELAPEDPEDS) is disordered. Asn-287 carries an N-linked (GlcNAc...) asparagine; by host glycan. The chain crosses the membrane as a helical span at residues 340–364 (MGLIAGAVGGSLLAALVICGIVYWM). Residues 365–394 (HRRTRKAPKRIRLPHIREDDQPSSHQPLFY) lie on the Intravirion side of the membrane.

Belongs to the herpesviridae glycoprotein D family. In terms of assembly, homodimer. Interacts with host receptor TNFRSF14. Interacts with host receptor NECTIN1. Interacts (via profusion domain) with gB; this interaction occurs in the absence of gH/gL. Interacts (via profusion domain) with gH/gL heterodimer; this interaction occurs in the absence of gB. Associates with the gB-gH/gL-gD complex. Interacts (via C-terminus) with UL11 tegument protein. Interacts with host RSAD2.

The protein localises to the virion membrane. Its subcellular location is the host Golgi apparatus. In terms of biological role, envelope glycoprotein that binds to the host cell entry receptors NECTIN1, TNFRSF14/HVEM and 3-O-sulfated heparan sulfate, promoting the virus entry into host cells. May trigger fusion with host membrane, by recruiting the fusion machinery composed of gB and gH/gL. The chain is Envelope glycoprotein D (gD) from Human herpesvirus 1 (strain Patton) (HHV-1).